A 335-amino-acid chain; its full sequence is Nucleoid-associated protein KPK_1538 (335 aa).

Belongs to the YejK family.

The protein localises to the cytoplasm. It is found in the nucleoid. The polypeptide is Nucleoid-associated protein KPK_1538 (Klebsiella pneumoniae (strain 342)).